The sequence spans 448 residues: MCDSKDNSGVSEKCGKKFTNYPLNTTPTSLNYNLPEISKKFYNLKNKYSRNGYGLSKTEFPSSIENCPSNEYSIMYDNKDPRFLIRFLLDDGRYIIADRDDGEVFDEAPTYLDNNNHPIISRHYTGEERQKFEQVGSGDYITGEQFFQFYTQNKTRVLSNCRALDSRTILLSTAKIFPIYPPASETQLTAFVNSSFYAAAIPQLPQTSLLENIPEPTSLDDSGVLPKDAVRAVKGSALLPCIIVHDPNLNNSDKMKFNTYYLLEYKEYWHQLWSQIIPAHQTVKIQERTGISEVVQNSMIEDLNMYIGADFGMLFYFRSSGFKEQITRGLNRPLSQTTTQLGERVEEMEYYNSNDLDVRYVKYALAREFTLKRVNGEIVKNWVAVDYRLAGIQSYPNAPITNPLTLTKHTIIRCENSYDGHIFKTPLIFKNGEVIVKTNEELIPKINQ.

A beta-trefoil domain region spans residues 1 to 198 (MCDSKDNSGV…TAFVNSSFYA (198 aa)). A disulfide bond links Cys-67 and Cys-161. The interval 199-448 (AAIPQLPQTS…NEELIPKINQ (250 aa)) is probable pore-forming domain.

This sequence belongs to the toxin_10 family. In terms of assembly, forms a heterodimer with BinA. Upon toxin crystal solubilization with NaOH at pH 12, only the 63-kDa (binB) and 43-kDa (binA) proteins were detected. Interacts with mosquito protein Cpm1 which acts as its host receptor. Processed by proteases extracted from C.pipiens larval gut; unlike its partner BinA, it does not form a stable digestion product.

The protein resides in the spore. The protein localises to the perispore. Component of a binary toxin active against Culex and some Aedes mosquito larvae. This subunit alone has no toxic larvicidal activity. This subunit is responsible for localized binding to specific regions of the host larval gut. Binary toxin internalization into host gut cells requires both proteins. The protein is Binary larvicide subunit BinB (binB) of Lysinibacillus sphaericus (Bacillus sphaericus).